A 278-amino-acid chain; its full sequence is Checkpoint protein Hus1-like (278 aa).

It belongs to the HUS1 family. Component of the 9-1-1 checkpoint clamp complex consisting of Rad9 isoform A, Rad1 and Hus1-like; the interactions with Rad1 and Rad9 are direct. This complex probably also forms with Rad9 isoform B, however 9-1-1 complex containing Rad9 isoform A localizes to the nuclear periphery. Expressed in ovary.

The protein localises to the cytoplasm. It is found in the nucleus envelope. In terms of biological role, component of the 9-1-1 checkpoint clamp complex. Involved in both meiotic and somatic DNA damage responses. Essential for activation of the meiotic checkpoint in response to double-strand DNA breaks; required for the S-phase checkpoint but not the G2-M phase checkpoint. Involved in double strand break repair by homologous recombination during meiosis; influences the organization of chromosomal DNA in the meiotic nucleus. This Drosophila melanogaster (Fruit fly) protein is Checkpoint protein Hus1-like.